Here is a 220-residue protein sequence, read N- to C-terminus: Probable N-acetyl-alpha-D-glucosaminyl L-malate deacetylase 2 (220 aa).

Positions 11, 14, and 125 each coordinate Zn(2+).

Belongs to the PIGL family. Zn(2+) serves as cofactor.

The enzyme catalyses (S)-malyl N-acetyl-alpha-D-glucosaminide + H2O = (S)-malyl alpha-D-glucosaminide + acetate. Its function is as follows. Involved in bacillithiol (BSH) biosynthesis. Catalyzes the second step of the pathway, the deacetylation of N-acetylglucosaminylmalate (GlcNAc-Mal) to glucosamine malate (GlcN-Mal). Has weak activity compared with bshB1. This is Probable N-acetyl-alpha-D-glucosaminyl L-malate deacetylase 2 from Bacillus cereus (strain ATCC 14579 / DSM 31 / CCUG 7414 / JCM 2152 / NBRC 15305 / NCIMB 9373 / NCTC 2599 / NRRL B-3711).